A 327-amino-acid chain; its full sequence is cAMP-dependent protein kinase regulatory subunit (327 aa).

Residues 1 to 47 (MTNNISHNQKATEKVEAQNNNNITRKRRGAISSEPLGDKPATPLPNI) form a disordered region. Positions 1-65 (MTNNISHNQK…RLEQALSNNI (65 aa)) are dimerization and phosphorylation. The Pseudophosphorylation motif motif lies at 27–31 (RRGAI). Serine 32 is modified (phosphoserine). 3',5'-cyclic AMP-binding positions include 66–188 (MFSH…EKVS), glutamate 136, arginine 145, 189–327 (ILRH…SQKS), glutamate 262, and arginine 271.

The protein belongs to the cAMP-dependent kinase regulatory chain family. As to quaternary structure, in Dictyostelium the holoenzyme is a dimer composed of a regulatory (R) and a catalytic (C) subunit. In the presence of cAMP it dissociates into the active C subunit and an R monomer. In other eukaryotes the holoenzyme is a tetramer composed of 2 regulatory (R) and 2 catalytic (C) subunits. In the presence of cAMP it dissociates into active monomeric C subunits and an R dimer. Post-translationally, the pseudophosphorylation site binds to the substrate-binding region of the catalytic chain but is not phosphorylated. The physiological significance of phosphorylations by other kinases is unclear.

In Dictyostelium discoideum (Social amoeba), this protein is cAMP-dependent protein kinase regulatory subunit (pkaR).